Reading from the N-terminus, the 83-residue chain is uncharacterized protein (83 aa).

A helical membrane pass occupies residues Ile50 to Ile70.

It belongs to the plectrovirus ORF7 family.

The protein resides in the host membrane. This is an uncharacterized protein from Spiroplasma citri (SpV1).